The following is a 435-amino-acid chain: Putative BTB/POZ domain-containing protein L275 (435 aa).

The 70-residue stretch at 80-149 (YDGYVYINVG…IKGKQNDNHN (70 aa)) folds into the BTB domain.

This sequence belongs to the mimivirus BTB/WD family.

The polypeptide is Putative BTB/POZ domain-containing protein L275 (Acanthamoeba polyphaga mimivirus (APMV)).